Here is a 227-residue protein sequence, read N- to C-terminus: UPF0173 metal-dependent hydrolase Bsph_4138 (227 aa).

It belongs to the UPF0173 family.

The chain is UPF0173 metal-dependent hydrolase Bsph_4138 from Lysinibacillus sphaericus (strain C3-41).